A 339-amino-acid chain; its full sequence is Fructose-1,6-bisphosphatase, cytosolic (339 aa).

Mg(2+)-binding residues include Glu71, Glu100, Asp121, Leu123, and Asp124. Residues 124 to 127 (DGSS), Asn215, Tyr247, Tyr267, and Lys277 each bind substrate. Mg(2+) is bound at residue Glu283.

Belongs to the FBPase class 1 family. Requires Mg(2+) as cofactor.

It localises to the cytoplasm. It carries out the reaction beta-D-fructose 1,6-bisphosphate + H2O = beta-D-fructose 6-phosphate + phosphate. This Oryza sativa subsp. indica (Rice) protein is Fructose-1,6-bisphosphatase, cytosolic.